The sequence spans 649 residues: DNA mismatch repair protein MutL (649 aa).

This sequence belongs to the DNA mismatch repair MutL/HexB family.

This protein is involved in the repair of mismatches in DNA. It is required for dam-dependent methyl-directed DNA mismatch repair. May act as a 'molecular matchmaker', a protein that promotes the formation of a stable complex between two or more DNA-binding proteins in an ATP-dependent manner without itself being part of a final effector complex. This chain is DNA mismatch repair protein MutL, found in Streptococcus pneumoniae serotype 19F (strain G54).